Reading from the N-terminus, the 249-residue chain is Small ribosomal subunit protein uS3 (249 aa).

The KH type-2 domain maps to 39–107; it reads VRAMLKKRLY…EVHLNIVEIR (69 aa). The disordered stretch occupies residues 215–249; that stretch reads LDKRLATESGPAGEGGGRERGDRPDRGDRGRRDRG. Residues 230–249 are compositionally biased toward basic and acidic residues; the sequence is GGRERGDRPDRGDRGRRDRG.

Belongs to the universal ribosomal protein uS3 family. Part of the 30S ribosomal subunit. Forms a tight complex with proteins S10 and S14.

Its function is as follows. Binds the lower part of the 30S subunit head. Binds mRNA in the 70S ribosome, positioning it for translation. In Caulobacter sp. (strain K31), this protein is Small ribosomal subunit protein uS3.